We begin with the raw amino-acid sequence, 259 residues long: Thiazole synthase (259 aa).

Lys-95 functions as the Schiff-base intermediate with DXP in the catalytic mechanism. 1-deoxy-D-xylulose 5-phosphate is bound by residues Gly-156, 182–183, and 204–205; these read AG and NT.

This sequence belongs to the ThiG family. Homotetramer. Forms heterodimers with either ThiH or ThiS.

The protein resides in the cytoplasm. The enzyme catalyses [ThiS sulfur-carrier protein]-C-terminal-Gly-aminoethanethioate + 2-iminoacetate + 1-deoxy-D-xylulose 5-phosphate = [ThiS sulfur-carrier protein]-C-terminal Gly-Gly + 2-[(2R,5Z)-2-carboxy-4-methylthiazol-5(2H)-ylidene]ethyl phosphate + 2 H2O + H(+). It participates in cofactor biosynthesis; thiamine diphosphate biosynthesis. Its function is as follows. Catalyzes the rearrangement of 1-deoxy-D-xylulose 5-phosphate (DXP) to produce the thiazole phosphate moiety of thiamine. Sulfur is provided by the thiocarboxylate moiety of the carrier protein ThiS. In vitro, sulfur can be provided by H(2)S. This Serratia proteamaculans (strain 568) protein is Thiazole synthase.